We begin with the raw amino-acid sequence, 677 residues long: DNA polymerase epsilon subunit B (677 aa).

It belongs to the DNA polymerase epsilon subunit B family. As to quaternary structure, heterotetramer. Consists of four subunits: POL2, DPB2, DPB3 and DPB4.

The protein localises to the nucleus. Functionally, as accessory component of the DNA polymerase epsilon (DNA polymerase II) participates in chromosomal DNA replication. In Eremothecium gossypii (strain ATCC 10895 / CBS 109.51 / FGSC 9923 / NRRL Y-1056) (Yeast), this protein is DNA polymerase epsilon subunit B (DPB2).